Reading from the N-terminus, the 341-residue chain is Glycerol-3-phosphate dehydrogenase [NAD(P)+] (341 aa).

Residues Ser-15, Trp-16, Arg-36, and Lys-110 each contribute to the NADPH site. Sn-glycerol 3-phosphate-binding residues include Lys-110, Gly-139, and Ser-141. NADPH is bound at residue Ala-143. Sn-glycerol 3-phosphate-binding residues include Lys-194, Asp-247, Ser-257, Arg-258, and Asn-259. The active-site Proton acceptor is the Lys-194. Residue Arg-258 participates in NADPH binding. Positions 282 and 284 each coordinate NADPH.

This sequence belongs to the NAD-dependent glycerol-3-phosphate dehydrogenase family.

Its subcellular location is the cytoplasm. The enzyme catalyses sn-glycerol 3-phosphate + NAD(+) = dihydroxyacetone phosphate + NADH + H(+). The catalysed reaction is sn-glycerol 3-phosphate + NADP(+) = dihydroxyacetone phosphate + NADPH + H(+). Its pathway is membrane lipid metabolism; glycerophospholipid metabolism. Its function is as follows. Catalyzes the reduction of the glycolytic intermediate dihydroxyacetone phosphate (DHAP) to sn-glycerol 3-phosphate (G3P), the key precursor for phospholipid synthesis. The protein is Glycerol-3-phosphate dehydrogenase [NAD(P)+] of Xanthomonas euvesicatoria pv. vesicatoria (strain 85-10) (Xanthomonas campestris pv. vesicatoria).